The chain runs to 254 residues: Tryptophan synthase alpha chain (254 aa).

Residues Glu48 and Asp59 each act as proton acceptor in the active site.

It belongs to the TrpA family. As to quaternary structure, tetramer of two alpha and two beta chains.

The catalysed reaction is (1S,2R)-1-C-(indol-3-yl)glycerol 3-phosphate + L-serine = D-glyceraldehyde 3-phosphate + L-tryptophan + H2O. The protein operates within amino-acid biosynthesis; L-tryptophan biosynthesis; L-tryptophan from chorismate: step 5/5. The alpha subunit is responsible for the aldol cleavage of indoleglycerol phosphate to indole and glyceraldehyde 3-phosphate. The sequence is that of Tryptophan synthase alpha chain from Desulfotalea psychrophila (strain LSv54 / DSM 12343).